The chain runs to 548 residues: Dihydroxy-acid dehydratase (548 aa).

Asp-78 contributes to the Mg(2+) binding site. Cys-119 serves as a coordination point for [2Fe-2S] cluster. Mg(2+)-binding residues include Asp-120 and Lys-121. Lys-121 is subject to N6-carboxylysine. Cys-185 contributes to the [2Fe-2S] cluster binding site. Glu-438 serves as a coordination point for Mg(2+). Ser-464 functions as the Proton acceptor in the catalytic mechanism.

Belongs to the IlvD/Edd family. As to quaternary structure, homodimer. The cofactor is [2Fe-2S] cluster. Requires Mg(2+) as cofactor.

It carries out the reaction (2R)-2,3-dihydroxy-3-methylbutanoate = 3-methyl-2-oxobutanoate + H2O. The enzyme catalyses (2R,3R)-2,3-dihydroxy-3-methylpentanoate = (S)-3-methyl-2-oxopentanoate + H2O. It functions in the pathway amino-acid biosynthesis; L-isoleucine biosynthesis; L-isoleucine from 2-oxobutanoate: step 3/4. It participates in amino-acid biosynthesis; L-valine biosynthesis; L-valine from pyruvate: step 3/4. Functions in the biosynthesis of branched-chain amino acids. Catalyzes the dehydration of (2R,3R)-2,3-dihydroxy-3-methylpentanoate (2,3-dihydroxy-3-methylvalerate) into 2-oxo-3-methylpentanoate (2-oxo-3-methylvalerate) and of (2R)-2,3-dihydroxy-3-methylbutanoate (2,3-dihydroxyisovalerate) into 2-oxo-3-methylbutanoate (2-oxoisovalerate), the penultimate precursor to L-isoleucine and L-valine, respectively. The polypeptide is Dihydroxy-acid dehydratase (Methanothrix thermoacetophila (strain DSM 6194 / JCM 14653 / NBRC 101360 / PT) (Methanosaeta thermophila)).